Here is a 127-residue protein sequence, read N- to C-terminus: MRYGEKEIKEFDVENMEIWPNDAKNDYIIKITLPEFMCCCPRSGYPDFATIYLEYMPDKFVVELKAIKLYINTFMYRNVSHEASINEIYNTLKDKLKPKWIKVVGDFNPRGNVHTVIECRSDMVVPK.

The Thioimide intermediate role is filled by Cys40. Asp47 functions as the Proton donor in the catalytic mechanism. Residues 62-64 and 81-82 contribute to the substrate site; these read VEL and HE.

It belongs to the GTP cyclohydrolase I family. QueF type 1 subfamily.

The protein localises to the cytoplasm. It carries out the reaction 7-aminomethyl-7-carbaguanine + 2 NADP(+) = 7-cyano-7-deazaguanine + 2 NADPH + 3 H(+). It participates in tRNA modification; tRNA-queuosine biosynthesis. Its function is as follows. Catalyzes the NADPH-dependent reduction of 7-cyano-7-deazaguanine (preQ0) to 7-aminomethyl-7-deazaguanine (preQ1). The polypeptide is NADPH-dependent 7-cyano-7-deazaguanine reductase (Campylobacter jejuni subsp. jejuni serotype O:2 (strain ATCC 700819 / NCTC 11168)).